Consider the following 428-residue polypeptide: Trigger factor (428 aa).

In terms of domain architecture, PPIase FKBP-type spans 163–248; the sequence is GDTAVIDFEG…VHEIKEKRLP (86 aa).

This sequence belongs to the FKBP-type PPIase family. Tig subfamily.

It localises to the cytoplasm. It catalyses the reaction [protein]-peptidylproline (omega=180) = [protein]-peptidylproline (omega=0). Involved in protein export. Acts as a chaperone by maintaining the newly synthesized protein in an open conformation. Functions as a peptidyl-prolyl cis-trans isomerase. In Geobacillus sp. (strain WCH70), this protein is Trigger factor.